The primary structure comprises 671 residues: DNA polymerase kappa (671 aa).

The 181-residue stretch at 105 to 285 (WLHVDMDAFY…LPVRKIGGIG (181 aa)) folds into the UmuC domain. Mg(2+) contacts are provided by aspartate 109 and aspartate 200. Glutamate 201 is a catalytic residue. A UBZ3-type zinc finger spans residues 576–613 (YWIDGYKCVLCGIELPPSFVEERQEHSDFHLAQRLQNE). Positions 583, 586, 601, and 605 each coordinate Zn(2+). The segment at 607-671 (AQRLQNEETG…NQNSNETQRK (65 aa)) is disordered. A Nuclear localization signal motif is present at residues 625–632 (KRRILGKE). The segment covering 629–650 (LGKEKVNSKPKKQKPDQKDSSK) has biased composition (basic and acidic residues). Polar residues predominate over residues 659-671 (TKSNQNSNETQRK).

This sequence belongs to the DNA polymerase type-Y family. The cofactor is Mg(2+). As to expression, expressed in roots, leaves, stems, flowers and siliques. Present in endoreduplicating cells.

It is found in the nucleus. It carries out the reaction DNA(n) + a 2'-deoxyribonucleoside 5'-triphosphate = DNA(n+1) + diphosphate. With respect to regulation, unable to bypass a single 1,N(6)-ethenoadenine (epsilon-dA) or an abasic site lesions in DNA templates. Its function is as follows. Template-directed low-fidelity DNA polymerase specifically involved in DNA repair. Able to extend primer-terminal mispairs, and to insert nucleotides opposite to a single 7,8-dihydro-8-oxoGuanine (8-oxoG) lesion and moderately extend from the resulting primer end, thus leading to both error-free and error-prone bypass of 8-oxoG DNA lesions. Probably involved in consecutive DNA replication cycles in the absence of mitosis. Binds preferentially template-primer DNA substrates or single-stranded DNA. Plays an important role in translesion synthesis, where the normal high-fidelity DNA polymerases cannot proceed and DNA synthesis stalls. Depending on the context, it inserts the correct base, but causes frequent base transitions, transversions and frameshifts. In Arabidopsis thaliana (Mouse-ear cress), this protein is DNA polymerase kappa.